We begin with the raw amino-acid sequence, 968 residues long: RNA polymerase-associated protein RapA (968 aa).

The region spanning glutamate 164–aspartate 334 is the Helicase ATP-binding domain. Residue aspartate 177 to threonine 184 participates in ATP binding. The short motif at aspartate 280–histidine 283 is the DEAH box element. Residues arginine 490 to aspartate 644 enclose the Helicase C-terminal domain.

This sequence belongs to the SNF2/RAD54 helicase family. RapA subfamily. As to quaternary structure, interacts with the RNAP. Has a higher affinity for the core RNAP than for the holoenzyme. Its ATPase activity is stimulated by binding to RNAP.

Functionally, transcription regulator that activates transcription by stimulating RNA polymerase (RNAP) recycling in case of stress conditions such as supercoiled DNA or high salt concentrations. Probably acts by releasing the RNAP, when it is trapped or immobilized on tightly supercoiled DNA. Does not activate transcription on linear DNA. Probably not involved in DNA repair. The protein is RNA polymerase-associated protein RapA of Yersinia pestis bv. Antiqua (strain Antiqua).